The sequence spans 86 residues: Putative membrane protein insertion efficiency factor (86 aa).

The protein belongs to the UPF0161 family.

The protein resides in the cell membrane. Functionally, could be involved in insertion of integral membrane proteins into the membrane. In Streptococcus pyogenes serotype M1, this protein is Putative membrane protein insertion efficiency factor.